Reading from the N-terminus, the 455-residue chain is Killer cell immunoglobulin-like receptor 3DL2 (455 aa).

The first 21 residues, 1-21, serve as a signal peptide directing secretion; the sequence is MSLTVVSMACVGFFLLQGAWP. Residues 22-340 lie on the Extracellular side of the membrane; that stretch reads LMGGQDKPFL…SKSGICRHLH (319 aa). 3 Ig-like C2-type domains span residues 42-102, 137-202, and 237-300; these read GGHV…RPHS, GETV…VPHS, and GENV…FRAL. 2 cysteine pairs are disulfide-bonded: Cys49/Cys95 and Cys144/Cys195. 4 N-linked (GlcNAc...) asparagine glycosylation sites follow: Asn179, Asn239, Asn273, and Asn306. Cys244 and Cys293 are oxidised to a cystine. A helical membrane pass occupies residues 341-360; that stretch reads VLIGTSVVIFLFILLLFFLL. The Cytoplasmic portion of the chain corresponds to 361–455; the sequence is YRWCSNKKNA…APQSGLEGVF (95 aa).

Belongs to the immunoglobulin superfamily. Interacts with peptide-free HLA-F open conformer. In terms of tissue distribution, expressed in astrocytes.

The protein resides in the cell membrane. Its function is as follows. Receptor on natural killer (NK) cells and T cells for MHC class I molecules. Upon binding of peptide-free HLA-F open conformer, negatively regulates NK and T cell effector functions. Acts as a receptor on astrocytes for HLA-F. Through interaction with HLA-F, may protect motor neurons from astrocyte-induced toxicity. This Homo sapiens (Human) protein is Killer cell immunoglobulin-like receptor 3DL2.